The following is a 309-amino-acid chain: NAD-dependent protein deacylase sirtuin-5B, mitochondrial (309 aa).

The N-terminal 35 residues, M1–P35, are a transit peptide targeting the mitochondrion. The region spanning S36–E306 is the Deacetylase sirtuin-type domain. G57–W76 serves as a coordination point for NAD(+). Substrate contacts are provided by Y101 and R104. Q139–D142 contributes to the NAD(+) binding site. The Proton acceptor role is filled by H157. Positions 165, 168, 206, and 211 each coordinate Zn(2+). NAD(+)-binding positions include G248–S250, N274–E276, and C292.

This sequence belongs to the sirtuin family. Class III subfamily. Zn(2+) serves as cofactor.

Its subcellular location is the mitochondrion. The protein localises to the cytoplasm. The protein resides in the cytosol. It is found in the nucleus. The catalysed reaction is N(6)-malonyl-L-lysyl-[protein] + NAD(+) + H2O = 2''-O-malonyl-ADP-D-ribose + nicotinamide + L-lysyl-[protein]. The enzyme catalyses N(6)-succinyl-L-lysyl-[protein] + NAD(+) + H2O = 2''-O-succinyl-ADP-D-ribose + nicotinamide + L-lysyl-[protein]. It carries out the reaction N(6)-glutaryl-L-lysyl-[protein] + NAD(+) + H2O = 2''-O-glutaryl-ADP-D-ribose + nicotinamide + L-lysyl-[protein]. Its function is as follows. NAD-dependent lysine demalonylase, desuccinylase and deglutarylase that specifically removes malonyl, succinyl and glutaryl groups on target proteins. Has weak NAD-dependent protein deacetylase activity; however this activity may not be physiologically relevant in vivo. This Xenopus laevis (African clawed frog) protein is NAD-dependent protein deacylase sirtuin-5B, mitochondrial (sirt5-b).